The sequence spans 286 residues: MAGAKEIRSKIASIKSTQKITSAMEKVAVSKMRKAQMRMAASRPYAERIRQVIGHLANANPEYRHPFMIERPVKRVGYVVVSSDRGLCGGLNTNLFKTLVKDMAVNRENGVEIDLCVVGSKGAAFFRNFGGNVVAAISHLGEEPSINDLIGSVKVMLDAYLDGRIDRLSVVSNKFINTMTQQPTVEQLIPLVATPDQGLKHHWDYLYEPDAKELLDGLMVRYVESQVYQAVVENNAAEQAARMIAMKNATDNAGDLISDLQLIYNKARQAAITQEISEIVGGAAAV.

This sequence belongs to the ATPase gamma chain family. F-type ATPases have 2 components, CF(1) - the catalytic core - and CF(0) - the membrane proton channel. CF(1) has five subunits: alpha(3), beta(3), gamma(1), delta(1), epsilon(1). CF(0) has three main subunits: a, b and c.

It localises to the cell inner membrane. Functionally, produces ATP from ADP in the presence of a proton gradient across the membrane. The gamma chain is believed to be important in regulating ATPase activity and the flow of protons through the CF(0) complex. This is ATP synthase gamma chain from Pseudomonas savastanoi pv. phaseolicola (strain 1448A / Race 6) (Pseudomonas syringae pv. phaseolicola (strain 1448A / Race 6)).